The sequence spans 183 residues: uncharacterized protein (183 aa).

4 helical membrane passes run 13-35, 60-82, 117-139, and 149-171; these read KALL…LTYS, LLIL…KLRF, FEPV…YAIF, and LLFY…LYLS.

It is found in the cell membrane. This is an uncharacterized protein from Archaeoglobus fulgidus (strain ATCC 49558 / DSM 4304 / JCM 9628 / NBRC 100126 / VC-16).